The sequence spans 257 residues: Deoxyribose-phosphate aldolase (257 aa).

Asp-102 functions as the Proton donor/acceptor in the catalytic mechanism. Lys-166 serves as the catalytic Schiff-base intermediate with acetaldehyde. Catalysis depends on Lys-198, which acts as the Proton donor/acceptor.

The protein belongs to the DeoC/FbaB aldolase family. DeoC type 2 subfamily.

The protein resides in the cytoplasm. It catalyses the reaction 2-deoxy-D-ribose 5-phosphate = D-glyceraldehyde 3-phosphate + acetaldehyde. The protein operates within carbohydrate degradation; 2-deoxy-D-ribose 1-phosphate degradation; D-glyceraldehyde 3-phosphate and acetaldehyde from 2-deoxy-alpha-D-ribose 1-phosphate: step 2/2. Functionally, catalyzes a reversible aldol reaction between acetaldehyde and D-glyceraldehyde 3-phosphate to generate 2-deoxy-D-ribose 5-phosphate. The chain is Deoxyribose-phosphate aldolase from Shewanella sediminis (strain HAW-EB3).